A 388-amino-acid chain; its full sequence is Succinate--CoA ligase [ADP-forming] subunit beta (388 aa).

An ATP-grasp domain is found at 9–244 (KQLFAEYGLP…PSQDDAREAH (236 aa)). Residues K46, 53–55 (GRG), E99, T102, and E107 contribute to the ATP site. The Mg(2+) site is built by N199 and D213. Residues N264 and 321-323 (GIV) contribute to the substrate site.

The protein belongs to the succinate/malate CoA ligase beta subunit family. As to quaternary structure, heterotetramer of two alpha and two beta subunits. It depends on Mg(2+) as a cofactor.

The catalysed reaction is succinate + ATP + CoA = succinyl-CoA + ADP + phosphate. It carries out the reaction GTP + succinate + CoA = succinyl-CoA + GDP + phosphate. It participates in carbohydrate metabolism; tricarboxylic acid cycle; succinate from succinyl-CoA (ligase route): step 1/1. In terms of biological role, succinyl-CoA synthetase functions in the citric acid cycle (TCA), coupling the hydrolysis of succinyl-CoA to the synthesis of either ATP or GTP and thus represents the only step of substrate-level phosphorylation in the TCA. The beta subunit provides nucleotide specificity of the enzyme and binds the substrate succinate, while the binding sites for coenzyme A and phosphate are found in the alpha subunit. The chain is Succinate--CoA ligase [ADP-forming] subunit beta from Pseudomonas aeruginosa (strain UCBPP-PA14).